Reading from the N-terminus, the 196-residue chain is Ribosome maturation factor RimP (196 aa).

It belongs to the RimP family.

Its subcellular location is the cytoplasm. Required for maturation of 30S ribosomal subunits. This chain is Ribosome maturation factor RimP, found in Lawsonia intracellularis (strain PHE/MN1-00).